Here is a 235-residue protein sequence, read N- to C-terminus: Probable inactive serine protease 37 (235 aa).

The N-terminal stretch at 1–19 (MKYVFYLGVLAGTFFFADS) is a signal peptide. The Peptidase S1 domain maps to 20–233 (SVQKEDPAPY…YVSWIENTAK (214 aa)). 3 disulfide bridges follow: Cys40–Cys56, Cys131–Cys198, and Cys163–Cys177.

Belongs to the peptidase S1 family. As to expression, testis-specific. Expressed in spermatids (at protein level).

Its subcellular location is the cytoplasmic vesicle. It is found in the secretory vesicle. The protein resides in the acrosome. The protein localises to the secreted. Plays a role in male fertility. May have a role in sperm migration or binding to zona-intact eggs. Involved in the activation of the proacrosin/acrosin system. The chain is Probable inactive serine protease 37 from Homo sapiens (Human).